Here is a 204-residue protein sequence, read N- to C-terminus: Cytochrome b6 (204 aa).

Residues 23-43 traverse the membrane as a helical segment; that stretch reads YCLGGITLTSFLVQVATGSAM. Cysteine 24 contacts heme c. Histidine 75 and histidine 89 together coordinate heme b. 3 consecutive transmembrane segments (helical) span residues 81–101, 107–127, and 136–157; these read MMVL…GFKK, WVTG…GYSL, and AVKI…LVEL. Heme b-binding residues include histidine 176 and histidine 191. A helical membrane pass occupies residues 177–197; that stretch reads TFILPLLTAVFMPMHFLMIRK.

The protein belongs to the cytochrome b family. PetB subfamily. In terms of assembly, the 4 large subunits of the cytochrome b6-f complex are cytochrome b6, subunit IV (17 kDa polypeptide, PetD), cytochrome f and the Rieske protein, while the 4 small subunits are PetG, PetL, PetM and PetN. The complex functions as a dimer. The cofactor is heme b. It depends on heme c as a cofactor.

It localises to the plastid. The protein localises to the chloroplast thylakoid membrane. In terms of biological role, component of the cytochrome b6-f complex, which mediates electron transfer between photosystem II (PSII) and photosystem I (PSI), cyclic electron flow around PSI, and state transitions. This is Cytochrome b6 from Picea abies (Norway spruce).